We begin with the raw amino-acid sequence, 134 residues long: Protein YhfA (134 aa).

This is Protein YhfA (yhfA) from Escherichia coli O157:H7.